A 215-amino-acid polypeptide reads, in one-letter code: Pyrrolidone-carboxylate peptidase (215 aa).

Residues E80, C143, and H167 contribute to the active site.

Belongs to the peptidase C15 family. In terms of assembly, homotetramer.

The protein resides in the cytoplasm. It catalyses the reaction Release of an N-terminal pyroglutamyl group from a polypeptide, the second amino acid generally not being Pro.. Its function is as follows. Removes 5-oxoproline from various penultimate amino acid residues except L-proline. In Bacillus cereus (strain B4264), this protein is Pyrrolidone-carboxylate peptidase.